Consider the following 1092-residue polypeptide: Elongation factor 3 (1092 aa).

ADP is bound at residue Val-92. 7 HEAT repeats span residues 95 to 133 (MVKT…SPVS), 138 to 175 (PYMI…RLTP), 177 to 214 (ATKQ…TAPR), 218 to 255 (TAVP…LINN), 257 to 293 (DIEK…EVLP), 294 to 331 (PTLA…LVEK), and 333 to 370 (QIIA…KILT). Glu-454 provides a ligand contact to ADP. 2 ABC transporter domains span residues 486-704 (EELC…YYEL) and 730-1044 (LKVQ…DKNK). The ADP site is built by Asn-766, Glu-973, Asn-976, and His-1002. Disordered stretches follow at residues 1023-1044 (TPTG…DKNK) and 1063-1092 (SKLS…DDDE). The span at 1063–1075 (SKLSGKDLRKKRK) shows a compositional bias: basic residues. Positions 1076–1086 (EREARRKRGEE) are enriched in basic and acidic residues.

Belongs to the ABC transporter superfamily. ABCF family. EF3 subfamily.

It localises to the cytoplasm. The protein resides in the cytosol. It carries out the reaction ATP + H2O = ADP + phosphate + H(+). The protein operates within protein biosynthesis; polypeptide chain elongation. Its function is as follows. Ribosome-dependent ATPase that functions in cytoplasmic translation elongation. Required for the ATP-dependent release of deacylated tRNA from the ribosomal E-site during protein biosynthesis. Stimulates the eEF1A-dependent binding of aminoacyl-tRNA to the ribosomal A-site, which has reduced affinity for tRNA as long as the E-site is occupied. Assists translation termination by stimulating the release of nascent protein from the ribosome by release factors. The chain is Elongation factor 3 from Gonapodya prolifera (strain JEL478) (Monoblepharis prolifera).